The following is a 186-amino-acid chain: dCTP deaminase (186 aa).

107–112 (KSSYAR) is a binding site for dCTP. Glutamate 133 functions as the Proton donor/acceptor in the catalytic mechanism. The dCTP site is built by glutamine 152, tyrosine 166, and glutamine 176.

This sequence belongs to the dCTP deaminase family. Homotrimer.

The enzyme catalyses dCTP + H2O + H(+) = dUTP + NH4(+). It functions in the pathway pyrimidine metabolism; dUMP biosynthesis; dUMP from dCTP (dUTP route): step 1/2. Catalyzes the deamination of dCTP to dUTP. This is dCTP deaminase from Chloroflexus aggregans (strain MD-66 / DSM 9485).